Consider the following 856-residue polypeptide: Translation initiation factor IF-2 (856 aa).

The 171-residue stretch at Pro-356–Lys-526 folds into the tr-type G domain. The tract at residues Gly-365–Thr-372 is G1. Gly-365–Thr-372 provides a ligand contact to GTP. A G2 region spans residues Gly-390–His-394. Residues Asp-412–Gly-415 are G3. GTP is bound by residues Asp-412–His-416 and Asn-466–Asp-469. Positions Asn-466–Asp-469 are G4. The segment at Ser-502 to Lys-504 is G5.

Belongs to the TRAFAC class translation factor GTPase superfamily. Classic translation factor GTPase family. IF-2 subfamily.

It localises to the cytoplasm. One of the essential components for the initiation of protein synthesis. Protects formylmethionyl-tRNA from spontaneous hydrolysis and promotes its binding to the 30S ribosomal subunits. Also involved in the hydrolysis of GTP during the formation of the 70S ribosomal complex. The chain is Translation initiation factor IF-2 from Ehrlichia ruminantium (strain Gardel).